Reading from the N-terminus, the 22-residue chain is Polydim-I (22 aa).

As to expression, expressed by the venom gland.

The protein localises to the secreted. Antibacterial peptide. Acts on the Mycobacterium abscessus subsp. massiliense cell wall. Reduces 40-50% of the bacterial load in macrophages infected with different M.abscessus strains. Is not cytotoxic towards mammalian cells, and shows no hemolytic activity against human erythrocytes. In vivo, reduces the bacterial load in the lungs, spleen, and liver of highly susceptible mice intravenously infected with M.abscessus. This is Polydim-I from Polybia dimorpha (Neotropical wasp).